Here is an 828-residue protein sequence, read N- to C-terminus: Mediator of RNA polymerase II transcription subunit 16 (828 aa).

WD repeat units follow at residues 68-107 (GHQE…ANSW), 199-241 (RCRV…VSEK), 264-308 (DKFP…LPLN), 622-663 (NQGS…CLPV), and 777-816 (FPTE…TCLC).

Belongs to the Mediator complex subunit 16 family. Component of the Mediator complex.

Its subcellular location is the nucleus. Its function is as follows. Component of the Mediator complex, a coactivator involved in the regulated transcription of nearly all RNA polymerase II-dependent genes. Mediator functions as a bridge to convey information from gene-specific regulatory proteins to the basal RNA polymerase II transcription machinery. Mediator is recruited to promoters by direct interactions with regulatory proteins and serves as a scaffold for the assembly of a functional preinitiation complex with RNA polymerase II and the general transcription factors. The protein is Mediator of RNA polymerase II transcription subunit 16 (med16) of Xenopus tropicalis (Western clawed frog).